Reading from the N-terminus, the 129-residue chain is Glycine cleavage system H protein (129 aa).

The Lipoyl-binding domain maps to Ser24–Met106. Lys65 carries the N6-lipoyllysine modification.

The protein belongs to the GcvH family. In terms of assembly, the glycine cleavage system is composed of four proteins: P, T, L and H. Requires (R)-lipoate as cofactor.

In terms of biological role, the glycine cleavage system catalyzes the degradation of glycine. The H protein shuttles the methylamine group of glycine from the P protein to the T protein. This Shewanella loihica (strain ATCC BAA-1088 / PV-4) protein is Glycine cleavage system H protein.